A 313-amino-acid polypeptide reads, in one-letter code: Porphobilinogen deaminase (313 aa).

Position 242 is an S-(dipyrrolylmethanemethyl)cysteine (Cys-242).

It belongs to the HMBS family. Monomer. Requires dipyrromethane as cofactor.

The catalysed reaction is 4 porphobilinogen + H2O = hydroxymethylbilane + 4 NH4(+). It participates in porphyrin-containing compound metabolism; protoporphyrin-IX biosynthesis; coproporphyrinogen-III from 5-aminolevulinate: step 2/4. Its function is as follows. Tetrapolymerization of the monopyrrole PBG into the hydroxymethylbilane pre-uroporphyrinogen in several discrete steps. The chain is Porphobilinogen deaminase from Escherichia coli (strain SE11).